Reading from the N-terminus, the 402-residue chain is 2-pyrone synthase (402 aa).

Residues Lys60, Arg63, Cys169, Leu272, Arg274, Gly310, Arg312, and Ala313 each coordinate acetoacetyl-CoA. Cys169 is a catalytic residue.

The protein belongs to the thiolase-like superfamily. Chalcone/stilbene synthases family. As to expression, expressed in both vegetative and reproductive organs. The expression is strong in the leaf, scape (the inflorescence stem) and corolla (both in the ligule and the unpigmented tube), moderate in the bract and carpel, detectable in the root and pappus but not detectable in the stamen.

It catalyses the reaction 2 malonyl-CoA + acetyl-CoA + 2 H(+) = triacetate lactone + 2 CO2 + 3 CoA. Its function is as follows. Polyketide synthase, which uses acetyl-CoA and two condensation reactions with malonyl-CoA to form triacetic acid lactone (also called methylpyrone), a precursor of phytoalexin. May participate in insect and pathogen resistance. The polypeptide is 2-pyrone synthase (Gerbera hybrida (Daisy)).